Consider the following 162-residue polypeptide: Ribosome-binding factor A (162 aa).

A disordered region spans residues 121–162; it reads DEVARVAAGASPAGDPDPYKEPRAEDADDAEVDEPSGSRQAD. The span at 125–136 shows a compositional bias: low complexity; the sequence is RVAAGASPAGDP.

This sequence belongs to the RbfA family. Monomer. Binds 30S ribosomal subunits, but not 50S ribosomal subunits or 70S ribosomes.

Its subcellular location is the cytoplasm. Functionally, one of several proteins that assist in the late maturation steps of the functional core of the 30S ribosomal subunit. Associates with free 30S ribosomal subunits (but not with 30S subunits that are part of 70S ribosomes or polysomes). Required for efficient processing of 16S rRNA. May interact with the 5'-terminal helix region of 16S rRNA. This Rhodococcus jostii (strain RHA1) protein is Ribosome-binding factor A.